The primary structure comprises 507 residues: MATLRVDEINKILRERIEQYNRKVGIENIGRVVQVGDGIARIIGLGEIMSGELVEFAEGTRGIALNLESKNVGIVLMGDGLMIQEGSFVKATGRIAQIPVSEAYLGRVINALAKPIDGRGEIVASESRLIESPAPGIISRRSVYEPLQTGLIAIDSMIPIGRGQRELIIGDRQTGKTAVATDTILNQKGQDVICVYVAIGQRASSVAQVVTTFHEEGAMEYTIVVAEMADSPATLQYLAPYTGAALAEYFMYRERHTLIIYDDLSKQAQAYRQMSLLLRRPPGREAYLGDVFYLHSRLLERAAKLNSLLGEGSMTALPIVETQSGDVSAYIPTNVISITDGQIFLSADLFNAGIRPAINVGISVSRVGSAAQIKAMKQVAGKSKLELAQFAELQAFAQFASALDKTSQNQLARGRRLRELLKQSQSNPLPVEEQVATIYTGTRGYLDSLEIEQVKKFLDELRKHLKDTKPQFQEIISSSKTFTEQAETLLKEAIQEQLERFSLQEQT.

An ATP-binding site is contributed by 170–177; the sequence is GDRQTGKT. A Phosphoserine modification is found at Ser383.

Belongs to the ATPase alpha/beta chains family. As to quaternary structure, F-type ATPases have 2 components, CF(1) - the catalytic core - and CF(0) - the membrane proton channel. CF(1) has five subunits: alpha(3), beta(3), gamma(1), delta(1), epsilon(1). CF(0) has four main subunits: a, b, b' and c. Only phosphorylated in mesophyll cells, and only when cells are grown under high rather than low light regimes (70 vs 900 umol photons/m-2/s).

The protein resides in the plastid. It localises to the chloroplast thylakoid membrane. The enzyme catalyses ATP + H2O + 4 H(+)(in) = ADP + phosphate + 5 H(+)(out). In terms of biological role, produces ATP from ADP in the presence of a proton gradient across the membrane. The alpha chain is a regulatory subunit. The protein is ATP synthase subunit alpha, chloroplastic of Zea mays (Maize).